The sequence spans 869 residues: Bifunctional uridylyltransferase/uridylyl-removing enzyme (869 aa).

Residues 1–332 are uridylyltransferase; that stretch reads MTATPADRPD…QFDGEAVPVQ (332 aa). The segment at 333–691 is uridylyl-removing; that stretch reads LDAGFSLRRG…RRAVPDNDAL (359 aa). An HD domain is found at 450–572; the sequence is VDQHTLMVLR…VGTRERLDYL (123 aa). 2 consecutive ACT domains span residues 692–771 and 798–869; these read EVFV…PSRR and RISL…LDPT.

The protein belongs to the GlnD family. Mg(2+) is required as a cofactor.

It catalyses the reaction [protein-PII]-L-tyrosine + UTP = [protein-PII]-uridylyl-L-tyrosine + diphosphate. The enzyme catalyses [protein-PII]-uridylyl-L-tyrosine + H2O = [protein-PII]-L-tyrosine + UMP + H(+). Uridylyltransferase (UTase) activity is inhibited by glutamine, while glutamine activates uridylyl-removing (UR) activity. In terms of biological role, modifies, by uridylylation and deuridylylation, the PII regulatory proteins (GlnB and homologs), in response to the nitrogen status of the cell that GlnD senses through the glutamine level. Under low glutamine levels, catalyzes the conversion of the PII proteins and UTP to PII-UMP and PPi, while under higher glutamine levels, GlnD hydrolyzes PII-UMP to PII and UMP (deuridylylation). Thus, controls uridylylation state and activity of the PII proteins, and plays an important role in the regulation of nitrogen assimilation and metabolism. The sequence is that of Bifunctional uridylyltransferase/uridylyl-removing enzyme from Xanthomonas campestris pv. campestris (strain 8004).